We begin with the raw amino-acid sequence, 1296 residues long: Phosphoribosylformylglycinamidine synthase (1296 aa).

Residues Trp304–Arg323 are disordered. ATP is bound by residues Gly306 to Asp317 and Ala677. Residues Asp678, Glu717, Asn721, and Asp885 each coordinate Mg(2+). Ser887 lines the ATP pocket. A compositionally biased stretch (basic and acidic residues) spans Pro1000 to Glu1013. Residues Pro1000 to Asn1019 are disordered. A Glutamine amidotransferase type-1 domain is found at Val1043 to Gly1296. Catalysis depends on Cys1136, which acts as the Nucleophile. Catalysis depends on residues His1261 and Glu1263.

This sequence in the N-terminal section; belongs to the FGAMS family. In terms of assembly, monomer.

It is found in the cytoplasm. It carries out the reaction N(2)-formyl-N(1)-(5-phospho-beta-D-ribosyl)glycinamide + L-glutamine + ATP + H2O = 2-formamido-N(1)-(5-O-phospho-beta-D-ribosyl)acetamidine + L-glutamate + ADP + phosphate + H(+). It participates in purine metabolism; IMP biosynthesis via de novo pathway; 5-amino-1-(5-phospho-D-ribosyl)imidazole from N(2)-formyl-N(1)-(5-phospho-D-ribosyl)glycinamide: step 1/2. In terms of biological role, phosphoribosylformylglycinamidine synthase involved in the purines biosynthetic pathway. Catalyzes the ATP-dependent conversion of formylglycinamide ribonucleotide (FGAR) and glutamine to yield formylglycinamidine ribonucleotide (FGAM) and glutamate. This chain is Phosphoribosylformylglycinamidine synthase, found in Yersinia pestis bv. Antiqua (strain Antiqua).